An 852-amino-acid chain; its full sequence is Bifunctional uridylyltransferase/uridylyl-removing enzyme (852 aa).

The interval 1-318 is uridylyltransferase; sequence MPANLSSALE…SAPMRVTLRI (318 aa). Residues 319 to 672 form a uridylyl-removing region; it reads DDDYIQVNNQ…SRILFKSDSF (354 aa). Residues 436-558 form the HD domain; it reads VDDHILTVVR…VQTHERLSAL (123 aa). ACT domains are found at residues 673-757 and 785-852; these read QVMV…SHSR and SVEI…EQLS.

This sequence belongs to the GlnD family. Mg(2+) is required as a cofactor.

The catalysed reaction is [protein-PII]-L-tyrosine + UTP = [protein-PII]-uridylyl-L-tyrosine + diphosphate. It catalyses the reaction [protein-PII]-uridylyl-L-tyrosine + H2O = [protein-PII]-L-tyrosine + UMP + H(+). With respect to regulation, uridylyltransferase (UTase) activity is inhibited by glutamine, while glutamine activates uridylyl-removing (UR) activity. Functionally, modifies, by uridylylation and deuridylylation, the PII regulatory proteins (GlnB and homologs), in response to the nitrogen status of the cell that GlnD senses through the glutamine level. Under low glutamine levels, catalyzes the conversion of the PII proteins and UTP to PII-UMP and PPi, while under higher glutamine levels, GlnD hydrolyzes PII-UMP to PII and UMP (deuridylylation). Thus, controls uridylylation state and activity of the PII proteins, and plays an important role in the regulation of nitrogen assimilation and metabolism. This Neisseria meningitidis serogroup A / serotype 4A (strain DSM 15465 / Z2491) protein is Bifunctional uridylyltransferase/uridylyl-removing enzyme.